Here is a 461-residue protein sequence, read N- to C-terminus: Propanal dehydrogenase (CoA-propanoylating) (461 aa).

Positions Met1 to Leu18 are targets protein to the BMC.

It belongs to the EutE/PduP family. Interacts with PduK, probably with its BMC-containing N-terminus. Interacts with shell proteins PduA and PduJ, interacts with PduQ.

The protein localises to the bacterial microcompartment. The catalysed reaction is propanal + NAD(+) + CoA = propanoyl-CoA + NADH + H(+). Its pathway is polyol metabolism; 1,2-propanediol degradation. Its function is as follows. A CoA-acylating aldehyde dehydrogenase required for optimal 1,2-propanediol (1,2-PD) degradation. Optimizes growth in the bacterial microcompartment (BMC) dedicated to 1,2-PD degradation by minimizing propionaldehyde toxicity. NAD(+) and NADH are regenerated internally within the Pdu BMC by the PduP and PduQ enzymes, which reduce NAD(+) and oxidize NADH respectively, although there must also be cofactor transport across the BMC. Directly targeted to the BMC. In terms of biological role, expression of a cosmid containing the full 21-gene pdu operon in E.coli allows E.coli to grow on 1,2-propanediol (1,2-PD) with the appearance of bacterial microcompartments (BMC) in its cytoplasm. Functionally, the 1,2-PD-specific bacterial microcompartment (BMC) concentrates low levels of 1,2-PD catabolic enzymes, concentrates volatile reaction intermediates thus enhancing pathway flux and keeps the level of toxic, mutagenic propionaldehyde low. This is Propanal dehydrogenase (CoA-propanoylating) from Citrobacter freundii.